The following is an 83-amino-acid chain: UPF0512 protein W (83 aa).

The protein belongs to the UPF0512 family.

This chain is UPF0512 protein W, found in Dictyostelium discoideum (Social amoeba).